The primary structure comprises 344 residues: Follistatin (344 aa).

An N-terminal signal peptide occupies residues 1-29 (MVRPRHQPGGLCLLLLLLCQFMEDRSAQA). The TB domain occupies 30–103 (GNCWLRQAKN…TCDNVDCGPG (74 aa)). Intrachain disulfides connect Cys32–Cys55, Cys42–Cys88, Cys56–Cys91, Cys95–Cys106, Cys100–Cys116, Cys118–Cys150, Cys122–Cys143, Cys132–Cys164, Cys168–Cys179, Cys173–Cys189, Cys192–Cys225, Cys196–Cys218, Cys207–Cys239, Cys245–Cys256, Cys250–Cys267, Cys270–Cys302, Cys274–Cys295, and Cys284–Cys316. A Follistatin-like 1 domain is found at 94 to 117 (TCDNVDCGPGKKCRMNKKNKPRCV). A Kazal-like 1 domain is found at 112 to 166 (NKPRCVCAPDCSNITWKGPVCGLDGKTYRNECALLKARCKEQPELEVQYQGKCKK). The N-linked (GlcNAc...) asparagine glycan is linked to Asn124. The region spanning 167-190 (TCRDVNCPGSSTCVVDQTNNAYCV) is the Follistatin-like 2 domain. Residues 186-241 (NAYCVTCNRICPEPTSSEQYLCGNDGVTYSSACHLRKATCLLGRSIGLAYEGKCIK) enclose the Kazal-like 2 domain. The region spanning 244 to 268 (SCEDIQCTGGKKCLWDFKVGRGRCS) is the Follistatin-like 3 domain. The Kazal-like 3 domain maps to 264 to 318 (RGRCSLCDELCPDSKSEEPVCASDNATYASECAMKEAACSSGVLLEVKHSGSCNS). Asn288 is a glycosylation site (N-linked (GlcNAc...) asparagine). The disordered stretch occupies residues 314-344 (GSCNSISEDTEEEEEDEDQDYSFPISSILEW). The segment covering 321–333 (EDTEEEEEDEDQD) has biased composition (acidic residues).

In terms of assembly, interacts with GDF11. Interacts with activin A/INHBA. Interacts with myostatin/MSTN.

The protein localises to the secreted. Its subcellular location is the nucleus. It is found in the nucleolus. In terms of biological role, multifunctional regulatory protein whose primary function is to antagonize members of the transforming growth factor beta (TGF-beta) superfamily including activin, myostatin, GDF11 or bone morphogenetic proteins (BMPs). Mechanistically, binds to these ligands in the extracellular space, blocking their type II receptor-binding site to inhibit downstream signaling. Plays an essential role in muscle fiber formation and growth both by preventing the repressive effects of myostatin and through SMAD3/AKT/mTOR signaling independently of myostatin. Also promotes neural differentiation by antagonizing the action BMP4. Acts as a specific inhibitor of the biosynthesis and secretion of pituitary follicle stimulating hormone (FSH) by sequestering activin A/INHBA. On the other hand, translocates into the nucleus where it down-regulates rRNA synthesis and ribosome biogenesis to maintain cellular energy homeostasis by binding to rDNA. The sequence is that of Follistatin from Equus caballus (Horse).